Consider the following 237-residue polypeptide: Isoprenyl transferase (237 aa).

Residue aspartate 14 is part of the active site. Aspartate 14 serves as a coordination point for Mg(2+). Substrate-binding positions include 15–18 (GNGR), tryptophan 19, arginine 27, histidine 31, and 59–61 (STE). Catalysis depends on asparagine 62, which acts as the Proton acceptor. Substrate is bound by residues tryptophan 63, arginine 65, arginine 184, and 190 to 192 (RIS). Glutamate 203 serves as a coordination point for Mg(2+).

This sequence belongs to the UPP synthase family. As to quaternary structure, homodimer. It depends on Mg(2+) as a cofactor.

Functionally, catalyzes the condensation of isopentenyl diphosphate (IPP) with allylic pyrophosphates generating different type of terpenoids. This chain is Isoprenyl transferase, found in Helicobacter hepaticus (strain ATCC 51449 / 3B1).